The primary structure comprises 281 residues: MTDRPLNVDSGLWIRRFHPAPNSAVRLVCLPHAGGSASYFFRFSEELHPSVEALSVQYPGRQDRRAEPCLESVEELAEHVVAATEPWWQEGRLAFFGHSLGASVAFETARILEQRHGVRPEGLYVSGRRAPSLAPDRLVHQLDDRAFLAEIRRLSGTDERFLQDDELLRLVLPALRSDYKAAETYLHRPSAKLTCPVMALAGDRDPKAPLNEVAEWRRHTSGPFCLRAYSGGHFYLNDQWHEICNDISDHLLVTRGAPDARVVQPPTSLIEGAAKRWQNPR.

Residues 26-249 are thioesterase; it reads RLVCLPHAGG…WHEICNDISD (224 aa). Ser-99 serves as the catalytic Nucleophile; for thioesterase activity. The Proton acceptor; for thioesterase activity role is filled by His-233.

This sequence belongs to the thioesterase family.

Its pathway is antibiotic biosynthesis. Functionally, involved in the biosynthesis of 12- and 14-membered ring macrolactone antibiotics such as methymycin, neomethymycin, narbomycin and pikromycin. Responsible for removing mis-formed acyl moieties (aberrant decarboxylation) that are bound to the PKS and could block it. Catalyzes the cleavage of methylmalonyl-[acp]. It exhibits some acyl-group specificity, and catalyzes the cleavage of propionyl and butyryl derivatives faster than acetyl malonyl or methylmalonyl derivatives. The polypeptide is Thioesterase PikA5 (Streptomyces venezuelae).